The chain runs to 72 residues: MIYKVYYQETKERNPQRETTQSLYLEAETEVAARTLVEDNTDHNIEFIEPLEGNFLDYEQKNPEYHLTEFNK.

It belongs to the RNA polymerase subunit epsilon family. As to quaternary structure, RNAP is composed of a core of 2 alpha, a beta and a beta' subunit. The core is associated with a delta subunit, and at least one of epsilon or omega. When a sigma factor is associated with the core the holoenzyme is formed, which can initiate transcription.

The catalysed reaction is RNA(n) + a ribonucleoside 5'-triphosphate = RNA(n+1) + diphosphate. Functionally, a non-essential component of RNA polymerase (RNAP). The polypeptide is DNA-directed RNA polymerase subunit epsilon (Lactiplantibacillus plantarum (strain ATCC BAA-793 / NCIMB 8826 / WCFS1) (Lactobacillus plantarum)).